Consider the following 736-residue polypeptide: Dynamin-1-like protein (736 aa).

M1 is modified (N-acetylmethionine). Residues 22 to 302 (IIQLPQIVVV…LMHHIRDCLP (281 aa)) enclose the Dynamin-type G domain. The G1 motif stretch occupies residues 32–39 (GTQSSGKS). 32–40 (GTQSSGKSS) is a GTP binding site. The interval 58-60 (VTR) is G2 motif. Residues 146–149 (DLPG) are G3 motif. The interval 215–218 (TKLD) is G4 motif. Residues 215 to 221 (TKLDLMD) and 246 to 249 (NRSQ) each bind GTP. Residues 245–248 (VNRS) form a G5 motif region. The tract at residues 344–489 (YCNTIEGTAK…NEMVHNLVAI (146 aa)) is middle domain. The interval 448–685 (NYSTQELLRF…NHVKDTLQSE (238 aa)) is interaction with GSK3B. The b domain stretch occupies residues 502 to 569 (ADACGLMNNN…IQDSRRETKN (68 aa)). Residues 523–590 (ELPSAVSRDK…VQEPTTGNWR (68 aa)) form a disordered region. S529 is subject to Phosphoserine. Residues K532 and K535 each participate in a glycyl lysine isopeptide (Lys-Gly) (interchain with G-Cter in SUMO) cross-link. Low complexity predominate over residues 537–554 (PSALAPASQEPSPAASAE). Phosphoserine is present on S548. Over residues 555 to 568 (ADGKLIQDSRRETK) the composition is skewed to basic and acidic residues. Glycyl lysine isopeptide (Lys-Gly) (interchain with G-Cter in SUMO) cross-links involve residues K558 and K568. O-linked (GlcNAc) threonine glycans are attached at residues T585 and T586. Residue K594 forms a Glycyl lysine isopeptide (Lys-Gly) (interchain with G-Cter in SUMO) linkage. The residue at position 597 (K597) is an N6-acetyllysine; alternate. A Glycyl lysine isopeptide (Lys-Gly) (interchain with G-Cter in SUMO); alternate cross-link involves residue K597. K606 is covalently cross-linked (Glycyl lysine isopeptide (Lys-Gly) (interchain with G-Cter in SUMO)). S607 carries the phosphoserine modification. K608 is covalently cross-linked (Glycyl lysine isopeptide (Lys-Gly) (interchain with G-Cter in SUMO)). S616 bears the Phosphoserine; by CDK1 and PINK1 mark. Position 637 is a phosphoserine; by CAMK1 and PKA (S637). Position 644 is an S-nitrosocysteine (C644). The 92-residue stretch at 644–735 (CEVIERLIKS…IIAEIRETHL (92 aa)) folds into the GED domain. The segment at 654–668 (YFLIVRKNIQDSVPK) is important for homodimerization.

The protein belongs to the TRAFAC class dynamin-like GTPase superfamily. Dynamin/Fzo/YdjA family. Homotetramer; dimerizes through the N-terminal GTP-middle region of one molecule binding to the GED domain of another DNM1L molecule. Oligomerizes in a GTP-dependent manner to form membrane-associated tubules with a spiral pattern. Interacts with GSK3B and MARCHF5. Interacts (via the GTPase and B domains) with UBE2I; the interaction promotes sumoylation of DNM1L, mainly in its B domain. Interacts with PPP3CA; the interaction dephosphorylates DNM1L and regulates its transition to mitochondria. Interacts with BCL2L1 isoform BCL-X(L) and CLTA; DNM1L and BCL2L1 isoform BCL-X(L) may form a complex in synaptic vesicles that also contains clathrin and MFF. Interacts with MFF; the interaction is inhibited by C11orf65/MFI. Interacts with FIS1; may form part of a larger protein complex at the endoplasmic reticulum-mitochondrial interface during mitochondrial fission. Interacts with CANX. Interacts with BCAP31. Interacts with MIEF2 and MIEF1; GTP-dependent, regulates GTP hydrolysis and DNM1L oligomerization. Interacts with PGAM5; this interaction leads to dephosphorylation at Ser-656 and activation of GTPase activity and eventually to mitochondria fragmentation. Interacts with RALBP1; during mitosis, recruits DNM1L to the mitochondrion and mediates its activation by the mitotic kinase cyclin B-CDK1. Interacts with FUNDC1; this interaction recruits DNM1L/DRP1 at ER-mitochondria contact sites. Phosphorylation/dephosphorylation events on two sites near the GED domain regulate mitochondrial fission. Phosphorylation on Ser-637 by CAMK1 and PKA inhibits the GTPase activity, leading to a defect in mitochondrial fission promoting mitochondrial elongation. Dephosphorylated on this site by PPP3CA which promotes mitochondrial fission. Phosphorylation on Ser-616 by CDK1 and PINK1 activates the GTPase activity and promotes mitochondrial fission. Phosphorylated in a circadian manner at Ser-637. Dephosphorylated by PGAM5. Post-translationally, sumoylated on various lysine residues within the B domain, probably by MUL1. Sumoylation positively regulates mitochondrial fission. Desumoylated by SENP5 during G2/M transition of mitosis. Appears to be linked to its catalytic activity. In terms of processing, S-nitrosylation increases DNM1L dimerization, mitochondrial fission and causes neuronal damage. Ubiquitination by MARCHF5 affects mitochondrial morphology. Post-translationally, O-GlcNAcylation augments the level of the GTP-bound active form of DNM1L and induces translocation from the cytoplasm to mitochondria in cardiomyocytes. It also decreases phosphorylation at Ser-637. Ubiquitously expressed with highest levels found in skeletal muscles, heart, kidney and brain. Isoform 1 is brain-specific. Isoform 2 and isoform 3 are predominantly expressed in testis and skeletal muscles respectively. Isoform 4 is weakly expressed in brain, heart and kidney. Isoform 5 is dominantly expressed in liver, heart and kidney. Isoform 6 is expressed in neurons.

The protein localises to the cytoplasm. The protein resides in the cytosol. It is found in the golgi apparatus. Its subcellular location is the endomembrane system. It localises to the mitochondrion outer membrane. The protein localises to the peroxisome. The protein resides in the membrane. It is found in the clathrin-coated pit. Its subcellular location is the cytoplasmic vesicle. It localises to the secretory vesicle. The protein localises to the synaptic vesicle membrane. The enzyme catalyses GTP + H2O = GDP + phosphate + H(+). GTPase activity is increased by binding to phospholipid membranes. Functionally, functions in mitochondrial and peroxisomal division. Mediates membrane fission through oligomerization into membrane-associated tubular structures that wrap around the scission site to constrict and sever the mitochondrial membrane through a GTP hydrolysis-dependent mechanism. The specific recruitment at scission sites is mediated by membrane receptors like MFF, MIEF1 and MIEF2 for mitochondrial membranes. While the recruitment by the membrane receptors is GTP-dependent, the following hydrolysis of GTP induces the dissociation from the receptors and allows DNM1L filaments to curl into closed rings that are probably sufficient to sever a double membrane. Acts downstream of PINK1 to promote mitochondrial fission in a PRKN-dependent manner. Plays an important role in mitochondrial fission during mitosis. Through its function in mitochondrial division, ensures the survival of at least some types of postmitotic neurons, including Purkinje cells, by suppressing oxidative damage. Required for normal brain development, including that of cerebellum. Facilitates developmentally regulated apoptosis during neural tube formation. Required for a normal rate of cytochrome c release and caspase activation during apoptosis; this requirement may depend upon the cell type and the physiological apoptotic cues. Required for formation of endocytic vesicles. Proposed to regulate synaptic vesicle membrane dynamics through association with BCL2L1 isoform Bcl-X(L) which stimulates its GTPase activity in synaptic vesicles; the function may require its recruitment by MFF to clathrin-containing vesicles. Required for programmed necrosis execution. Rhythmic control of its activity following phosphorylation at Ser-637 is essential for the circadian control of mitochondrial ATP production. Inhibits peroxisomal division when overexpressed. In Homo sapiens (Human), this protein is Dynamin-1-like protein.